Here is a 470-residue protein sequence, read N- to C-terminus: MNPNQKIICISATGMTLSVVSLLVGIANLGLNIGLHYKVGDTPNVNIPNVNGTNSTTTIINNNTQNNFTNITNIIQSKGGERTFLNLTKPLCEVNSWHILSKDNAIRIGEDAHILVTREPYLSCDPQGCRMFALSQGTTLRGRHANGTIHDRSPFRALISWEMGQAPSPYNTRVECIGWSSTSCHDGMSRMSICMSGPNNNASAVVWYGGRPITEIPSWAGNILRTQESECVCHKGVCPVVMTDGPANNRAATKIIYFKEGKIQKIEELAGNAQHIEECSCYGAGGVIKCICRDNWKGANRPVITIDPEMMTHTSKYLCSKVLTDTSRPNDPTNGNCDAPITGGSPDPGVKGFAFLDGENSWLGRTISKDSRSGYEMLKVPNAETDIQSGPISNQVIVNNQNWSGYSGAFIDYWANKECFNPCFYVELIRGRPKESSVLWTSNSIVALCGSKKRLGSWSWHDGAEIIYFE.

Residues 1-6 (MNPNQK) lie on the Intravirion side of the membrane. Residues 7 to 27 (IICISATGMTLSVVSLLVGIA) form a helical membrane-spanning segment. Residues 11-33 (SATGMTLSVVSLLVGIANLGLNI) form an involved in apical transport and lipid raft association region. The Virion surface segment spans residues 28–470 (NLGLNIGLHY…HDGAEIIYFE (443 aa)). The tract at residues 36–88 (HYKVGDTPNVNIPNVNGTNSTTTIINNNTQNNFTNITNIIQSKGGERTFLNLT) is hypervariable stalk region. 6 N-linked (GlcNAc...) asparagine; by host glycosylation sites follow: N51, N54, N62, N67, N70, and N86. The head of neuraminidase stretch occupies residues 91–470 (LCEVNSWHIL…HDGAEIIYFE (380 aa)). Cystine bridges form between C92–C419, C124–C129, C176–C194, C184–C231, C233–C238, C279–C292, C281–C290, C319–C337, and C423–C449. R118 serves as a coordination point for substrate. An N-linked (GlcNAc...) asparagine; by host glycan is attached at N146. Residue D151 is the Proton donor/acceptor of the active site. R152 contacts substrate. N-linked (GlcNAc...) asparagine; by host glycosylation occurs at N201. 277-278 (EE) lines the substrate pocket. R293 serves as a coordination point for substrate. Positions 294, 298, 325, and 348 each coordinate Ca(2+). Residue R372 coordinates substrate. Residue N402 is glycosylated (N-linked (GlcNAc...) asparagine; by host). Catalysis depends on Y406, which acts as the Nucleophile.

It belongs to the glycosyl hydrolase 34 family. In terms of assembly, homotetramer. Ca(2+) serves as cofactor. N-glycosylated.

The protein resides in the virion membrane. It localises to the host apical cell membrane. It catalyses the reaction Hydrolysis of alpha-(2-&gt;3)-, alpha-(2-&gt;6)-, alpha-(2-&gt;8)- glycosidic linkages of terminal sialic acid residues in oligosaccharides, glycoproteins, glycolipids, colominic acid and synthetic substrates.. With respect to regulation, inhibited by the neuraminidase inhibitors zanamivir (Relenza) and oseltamivir (Tamiflu). These drugs interfere with the release of progeny virus from infected cells and are effective against all influenza strains. Resistance to neuraminidase inhibitors is quite rare. Its function is as follows. Catalyzes the removal of terminal sialic acid residues from viral and cellular glycoconjugates. Cleaves off the terminal sialic acids on the glycosylated HA during virus budding to facilitate virus release. Additionally helps virus spread through the circulation by further removing sialic acids from the cell surface. These cleavages prevent self-aggregation and ensure the efficient spread of the progeny virus from cell to cell. Otherwise, infection would be limited to one round of replication. Described as a receptor-destroying enzyme because it cleaves a terminal sialic acid from the cellular receptors. May facilitate viral invasion of the upper airways by cleaving the sialic acid moieties on the mucin of the airway epithelial cells. Likely to plays a role in the budding process through its association with lipid rafts during intracellular transport. May additionally display a raft-association independent effect on budding. Plays a role in the determination of host range restriction on replication and virulence. Sialidase activity in late endosome/lysosome traffic seems to enhance virus replication. In Influenza A virus (strain A/Duck/England/1/1956 H11N6), this protein is Neuraminidase.